The primary structure comprises 538 residues: Atos homolog protein B (538 aa).

Composition is skewed to polar residues over residues 1 to 12 (MRHVQAETSPSS) and 129 to 141 (GGSS…SGAR). Disordered regions lie at residues 1–98 (MRHV…EPPT), 129–185 (GGSS…QLHT), and 201–303 (LVSG…PTDC). Pro residues predominate over residues 227–238 (HTPPGPGPPGPC). 2 positions are modified to phosphoserine: serine 254 and serine 255. The tract at residues 348-430 (LLGNFEESLL…VPKVGTIQVT (83 aa)) is required for macropage invasion. The segment at 436 to 444 (QTVVKMFLV) is transactivation domain 1 (TAD1).

The protein belongs to the ATOS family.

It is found in the nucleus. In terms of biological role, transcription regulator that may syncronize transcriptional and translational programs. This chain is Atos homolog protein B, found in Bos taurus (Bovine).